The chain runs to 309 residues: Acetylglutamate kinase (309 aa).

Residues 69-70, R91, and N194 each bind substrate; that span reads GG.

The protein belongs to the acetylglutamate kinase family. ArgB subfamily.

It is found in the cytoplasm. It catalyses the reaction N-acetyl-L-glutamate + ATP = N-acetyl-L-glutamyl 5-phosphate + ADP. The protein operates within amino-acid biosynthesis; L-arginine biosynthesis; N(2)-acetyl-L-ornithine from L-glutamate: step 2/4. Functionally, catalyzes the ATP-dependent phosphorylation of N-acetyl-L-glutamate. This Vesicomyosocius okutanii subsp. Calyptogena okutanii (strain HA) protein is Acetylglutamate kinase.